We begin with the raw amino-acid sequence, 487 residues long: Serralysin (487 aa).

Positions 1–16 (MQSTKKAIEITESSLA) are excised as a propeptide. His-192 is a Zn(2+) binding site. The active site involves Glu-193. Zn(2+)-binding residues include His-196, His-202, and Tyr-232. Residues Arg-269, Gly-271, Thr-273, Asp-301, Gly-303, Gly-304, Asp-306, Thr-343, Glu-345, Gly-350, Gly-352, Asp-354, Asn-359, Ala-361, Asn-363, Gly-367, Gly-368, Ala-369, Gly-370, Asp-372, Gly-376, Gly-377, Gly-378, Gly-379, Asp-381, Gly-385, Gly-386, Ala-387, Gly-388, Asp-390, Asp-399, Asp-406, and Asp-416 each coordinate Ca(2+). Hemolysin-type calcium-binding repeat units lie at residues 348–365 (IGGSGNDVIVGNAANNVL) and 366–383 (KGGAGNDVLFGGGGADEL).

The protein belongs to the peptidase M10B family. It depends on Ca(2+) as a cofactor. The cofactor is Zn(2+).

It is found in the secreted. It catalyses the reaction Preferential cleavage of bonds with hydrophobic residues in P1'.. In terms of biological role, has insecticidal activity against the locust M.palpalis. When administered orally to locusts at a low dose it causes them to lie on their sides exhibiting sporadic limb movements and muscular twitching, followed by full recovery. When administered at higher doses the same symptoms are observed, followed by death. In Serratia marcescens, this protein is Serralysin.